We begin with the raw amino-acid sequence, 155 residues long: Aspartate carbamoyltransferase regulatory chain (155 aa).

4 residues coordinate Zn(2+): cysteine 112, cysteine 117, cysteine 138, and cysteine 141.

The protein belongs to the PyrI family. As to quaternary structure, contains catalytic and regulatory chains. The cofactor is Zn(2+).

In terms of biological role, involved in allosteric regulation of aspartate carbamoyltransferase. This Methanocorpusculum labreanum (strain ATCC 43576 / DSM 4855 / Z) protein is Aspartate carbamoyltransferase regulatory chain.